The primary structure comprises 190 residues: Glutathione peroxidase 2 (190 aa).

Residue Sec40 is part of the active site. Residue Sec40 is a non-standard amino acid, selenocysteine.

It belongs to the glutathione peroxidase family. Homotetramer. Mostly in liver and gastrointestinal tract, not found in heart or kidney.

It localises to the cytoplasm. The protein resides in the cytosol. The enzyme catalyses 2 glutathione + H2O2 = glutathione disulfide + 2 H2O. The catalysed reaction is a hydroperoxy polyunsaturated fatty acid + 2 glutathione = a hydroxy polyunsaturated fatty acid + glutathione disulfide + H2O. It catalyses the reaction tert-butyl hydroperoxide + 2 glutathione = tert-butanol + glutathione disulfide + H2O. It carries out the reaction cumene hydroperoxide + 2 glutathione = 2-phenylpropan-2-ol + glutathione disulfide + H2O. The enzyme catalyses (13S)-hydroperoxy-(9Z,11E)-octadecadienoate + 2 glutathione = (13S)-hydroxy-(9Z,11E)-octadecadienoate + glutathione disulfide + H2O. The catalysed reaction is (5S)-hydroperoxy-(6E,8Z,11Z,14Z)-eicosatetraenoate + 2 glutathione = (5S)-hydroxy-(6E,8Z,11Z,14Z)-eicosatetraenoate + glutathione disulfide + H2O. It catalyses the reaction (12R)-hydroperoxy-(5Z,8Z,10E,14Z)-eicosatetraenoate + 2 glutathione = (12R)-hydroxy-(5Z,8Z,10E,14Z)-eicosatetraenoate + glutathione disulfide + H2O. It carries out the reaction (15S)-hydroperoxy-(5Z,8Z,11Z,13E)-eicosatetraenoate + 2 glutathione = (15S)-hydroxy-(5Z,8Z,11Z,13E)-eicosatetraenoate + glutathione disulfide + H2O. Its function is as follows. Catalyzes the reduction of hydroperoxides in a glutathione-dependent manner thus regulating cellular redox homeostasis. Can reduce small soluble hydroperoxides such as H2O2, cumene hydroperoxide and tert-butyl hydroperoxide, as well as several fatty acid-derived hydroperoxides. Cannot reduce phosphatidycholine hydroperoxide. This Homo sapiens (Human) protein is Glutathione peroxidase 2.